The chain runs to 557 residues: Multidrug transporter FLR1 (557 aa).

N-linked (GlcNAc...) asparagine glycosylation is found at asparagine 33, asparagine 48, and asparagine 106. Positions 44–57 (SESSNMSFNSGSEE) are enriched in low complexity. Residues 44–67 (SESSNMSFNSGSEENSQEKSVEDL) are disordered. 8 helical membrane passes run 113–133 (ALIIIQTMLLTCVNYMGSSIY), 149–169 (VVGTLNLSLYVLGYGLGPIVF), 181–201 (LPVYMITFFLFTMLQIGCALA), 204–224 (FAGLVILRFITGVLCSPALST), 238–258 (LALVLGLWSIGAVAAPVLAPL), 271–291 (WIFWLLFFCCCATMLLLTFFF), 355–375 (LYIALCYGAFYLFFEAFPIVF), and 387–407 (GLAYFGFCVGCIFAYIILLVF). The N-linked (GlcNAc...) asparagine glycan is linked to asparagine 418. 4 helical membrane-spanning segments follow: residues 426–446 (TLILAMCIGWCIPLALFMFGW), 450–470 (VHWILPIISEVFFVLGCFNIF), 484–506 (YVASVFAGNGFARSSFAAAFPLF), and 521–541 (VAWGSSLVGFFTIGLWVIPFV).

The protein belongs to the major facilitator superfamily.

It is found in the cell membrane. In terms of biological role, multidrug transporter that confers resistance to 5-flucytosine (5-FC) and clotrimazole. Also confers resistance to benomyl, but not 4-nitroquinoline-N-oxide, cycloheximide, or fluconazole. Plays direct roles in extrusion of 5-flucytosine and clotrimazole. The protein is Multidrug transporter FLR1 of Candida glabrata (strain ATCC 2001 / BCRC 20586 / JCM 3761 / NBRC 0622 / NRRL Y-65 / CBS 138) (Yeast).